The following is a 359-amino-acid chain: Serine/threonine-protein phosphatase 2A activator 2 (359 aa).

Belongs to the PTPA-type PPIase family.

It localises to the cytoplasm. The enzyme catalyses [protein]-peptidylproline (omega=180) = [protein]-peptidylproline (omega=0). Its function is as follows. PPIases accelerate the folding of proteins. It catalyzes the cis-trans isomerization of proline imidic peptide bonds in oligopeptides. Acts as a regulatory subunit for PP2A-like phosphatases modulating their activity or substrate specificity, probably by inducing a conformational change in the catalytic subunit, a direct target of the PPIase. Can reactivate inactive phosphatase PP2A-phosphatase methylesterase complexes (PP2Ai) in presence of ATP and Mg(2+) by dissociating the inactive form from the complex. This is Serine/threonine-protein phosphatase 2A activator 2 (RRD2) from Eremothecium gossypii (strain ATCC 10895 / CBS 109.51 / FGSC 9923 / NRRL Y-1056) (Yeast).